Consider the following 214-residue polypeptide: Uridine kinase (214 aa).

Residue 15–22 coordinates ATP; the sequence is GASASGKS.

This sequence belongs to the uridine kinase family.

The protein localises to the cytoplasm. The catalysed reaction is uridine + ATP = UMP + ADP + H(+). The enzyme catalyses cytidine + ATP = CMP + ADP + H(+). Its pathway is pyrimidine metabolism; CTP biosynthesis via salvage pathway; CTP from cytidine: step 1/3. The protein operates within pyrimidine metabolism; UMP biosynthesis via salvage pathway; UMP from uridine: step 1/1. The sequence is that of Uridine kinase from Tolumonas auensis (strain DSM 9187 / NBRC 110442 / TA 4).